Consider the following 1309-residue polypeptide: Tetratricopeptide repeat protein 41 (1309 aa).

6 TPR repeats span residues 399 to 432 (PQLE…KPCI), 651 to 684 (WIQE…SVRE), 817 to 851 (LTFL…SVQS), 859 to 892 (LKAQ…LLRF), 989 to 1024 (MSYF…KEKA), and 1042 to 1079 (SDTL…RAAH).

It localises to the cytoplasm. This chain is Tetratricopeptide repeat protein 41, found in Rattus norvegicus (Rat).